A 322-amino-acid chain; its full sequence is Coelomocyte uptake defective protein 15 (322 aa).

The signal sequence occupies residues 1 to 20 (MVNSLSRILFCSLLIFSVIS). N-linked (GlcNAc...) asparagine glycans are attached at residues asparagine 62, asparagine 98, asparagine 144, asparagine 170, asparagine 180, asparagine 183, and asparagine 222. The chain crosses the membrane as a helical span at residues 244 to 264 (LFGIMITFGTLLLLTALFYAA).

It belongs to the OSTM1 family.

Its subcellular location is the membrane. Functionally, modulates the transport of substances from the endosomal to lysosomal compartments. Plays a role in lysosome formation and function in coelomocytes. This Caenorhabditis elegans protein is Coelomocyte uptake defective protein 15.